The following is a 307-amino-acid chain: UDP-N-acetylenolpyruvoylglucosamine reductase (307 aa).

The region spanning 33-197 (TGGNADFYIT…LEAAFTLAPG (165 aa)) is the FAD-binding PCMH-type domain. Arg176 is a catalytic residue. The Proton donor role is filled by Ser226. Glu296 is a catalytic residue.

The protein belongs to the MurB family. Requires FAD as cofactor.

Its subcellular location is the cytoplasm. The enzyme catalyses UDP-N-acetyl-alpha-D-muramate + NADP(+) = UDP-N-acetyl-3-O-(1-carboxyvinyl)-alpha-D-glucosamine + NADPH + H(+). It participates in cell wall biogenesis; peptidoglycan biosynthesis. Cell wall formation. In Staphylococcus aureus (strain NCTC 8325 / PS 47), this protein is UDP-N-acetylenolpyruvoylglucosamine reductase.